The sequence spans 693 residues: Putative transmembrane protein ORF68 (693 aa).

The signal sequence occupies residues 1–17 (MILTIILYTLLFSTCSA). At 18 to 666 (QSVHTMPEAV…WLTKFGTGGG (649 aa)) the chain is on the extracellular side. The stretch at 208 to 256 (SKAANNRMDALEDGMKNINTRVTETNLLLEKLSTEVTGALTQLENEIKM) forms a coiled coil. The chain crosses the membrane as a helical span at residues 667–687 (IAGVTIGLLLPILAIVFSCYV). The Cytoplasmic portion of the chain corresponds to 688–693 (FCKRRV).

The protein localises to the host membrane. This is Putative transmembrane protein ORF68 from Magallana gigas (Pacific oyster).